Here is a 288-residue protein sequence, read N- to C-terminus: NAD kinase (288 aa).

The active-site Proton acceptor is the aspartate 70. NAD(+)-binding positions include 70-71 (DG), 144-145 (ND), arginine 155, lysine 172, aspartate 174, 185-190 (TGYSLS), and glutamine 245.

The protein belongs to the NAD kinase family. Requires a divalent metal cation as cofactor.

The protein resides in the cytoplasm. It carries out the reaction NAD(+) + ATP = ADP + NADP(+) + H(+). In terms of biological role, involved in the regulation of the intracellular balance of NAD and NADP, and is a key enzyme in the biosynthesis of NADP. Catalyzes specifically the phosphorylation on 2'-hydroxyl of the adenosine moiety of NAD to yield NADP. The sequence is that of NAD kinase from Geobacter sp. (strain M21).